The primary structure comprises 83 residues: Toxin TdNa5 (83 aa).

The first 20 residues, 1–20 (MKTIIFFIACLMLIDVVVES), serve as a signal peptide directing secretion. The LCN-type CS-alpha/beta domain maps to 21–82 (KDGYIIEHRG…IFDSNNNKCG (62 aa)). 4 disulfides stabilise this stretch: cysteine 31–cysteine 81, cysteine 35–cysteine 57, cysteine 43–cysteine 62, and cysteine 47–cysteine 64. The residue at position 81 (cysteine 81) is a Cysteine amide.

The protein belongs to the long (4 C-C) scorpion toxin superfamily. Sodium channel inhibitor family. Beta subfamily. In terms of tissue distribution, expressed by the venom gland.

The protein localises to the secreted. In terms of biological role, inhibits the sodium currents (Nav) in an apparent irreversible manner. Produces small depolarization and induces repetitive firing in squid axons. Is specific for arthropods (crickets, triatomides, crabs and squids), but is non-toxic to mice. Shows antibacterial activity against both Gram-positive and Gram-negative bacteria. The polypeptide is Toxin TdNa5 (Tityus discrepans (Venezuelan scorpion)).